The chain runs to 205 residues: Small ribosomal subunit protein mS26 (205 aa).

The N-terminal 26 residues, 1-26, are a transit peptide targeting the mitochondrion; sequence MLRALSTLGARPLGRPPAQFLLLARG.

The protein belongs to the mitochondrion-specific ribosomal protein mS26 family. In terms of assembly, component of the mitochondrial ribosome small subunit (28S) which comprises a 12S rRNA and about 30 distinct proteins.

Its subcellular location is the mitochondrion. The polypeptide is Small ribosomal subunit protein mS26 (MRPS26) (Bos taurus (Bovine)).